Consider the following 183-residue polypeptide: PLAT domain-containing protein 2 (183 aa).

A signal peptide spans 1–25 (MMPRRDVLFLSLLLVIATVSAVALA). The PLAT domain occupies 31-158 (CVYTFFLRTG…SPYELSAVRN (128 aa)).

It localises to the endoplasmic reticulum. Its function is as follows. Involved in response to abiotic stress. This Arabidopsis thaliana (Mouse-ear cress) protein is PLAT domain-containing protein 2.